A 150-amino-acid polypeptide reads, in one-letter code: Transcriptional regulator MraZ (150 aa).

SpoVT-AbrB domains follow at residues 7 to 55 (SHAI…PEPE) and 84 to 127 (AALM…SEES).

Belongs to the MraZ family. In terms of assembly, forms oligomers.

It is found in the cytoplasm. Its subcellular location is the nucleoid. This is Transcriptional regulator MraZ from Marinobacter nauticus (strain ATCC 700491 / DSM 11845 / VT8) (Marinobacter aquaeolei).